The chain runs to 704 residues: MDASPEPQQKGGTLVLVRRQPPVSQGLLETLKARLKKSCTCSMPCAQALVQGLFPAIHWLPQYRLKEYLAGDVMSGLVIGIILVPQAIAYSLLAGLQPIYSLYTSFFANLIYFLMGTSRHVNVGIFSLLCLMVGQVVDRELQLAGFDPSQDSLGPKNNDSTLNNSATTLIIGLQDCRRDCYAIRVATALTLMAGLYQVLMGILRLGFVSTYLSQPLLDGFAMGASVTILTSQAKHMLGVQIPRHQGLGMVVHTWLSLLQNVGQANICDVVTSALCLGVLLAAKELSDRYRHRLKVPIPTELFVIVVATIVSHFGQLHTRFDSRVAGNIPTGFVAPQVPDPKIMWRVALDAMSLALVGSAFSISLAEMFARSHGYSVSANQELLAVGCCNVLPAFFHCFATSAALSKTLVKIATGCQTQLSSVVSAAVVLLVLLVLAPLFHDLQRCVLACIIVVSLRGALRKVKDLPQLWRLSPADALVWVATAATCVLVSTEAGLLAGVFFSLLSLAGRTQRPRAALLARIGDSTFYEDAAEFEGLLPPPEVRVFRFTGPLYYANKDFFLRSLYRLTGLDAGHSATRKDQGPEVGVSNRSLVDGKDLGSVSSGAGLVVPLAFGFHTVVIDCAPLLFLDVAGMATLKDLRRDYRALDITLLLACCSPSVRDTLRKGGFLGEEQGAENELLFPSVHSAVEAACARREELLAADSAL.

T13 is modified (phosphothreonine). 2 helical membrane-spanning segments follow: residues 68–90 (YLAG…AIAY) and 94–116 (AGLQ…FLMG). Residues N158 and N163 are each glycosylated (N-linked (GlcNAc...) asparagine). 7 helical membrane-spanning segments follow: residues 185-207 (VATA…RLGF), 260-282 (NVGQ…LLAA), 295-314 (VPIP…SHFG), 347-369 (ALDA…EMFA), 382-404 (LLAV…SAAL), 417-439 (TQLS…APLF), and 477-499 (LVWV…LAGV). An STAS domain is found at 532–690 (EFEGLLPPPE…PSVHSAVEAA (159 aa)). S587 is subject to Phosphoserine. An N-linked (GlcNAc...) asparagine glycan is attached at N588. Residue S590 is modified to Phosphoserine.

The protein belongs to the SLC26A/SulP transporter (TC 2.A.53) family. Expressed in the heart, cecum, calvaria, brain, liver, skeletal muscle and kidney.

The protein localises to the cell membrane. It localises to the basolateral cell membrane. It carries out the reaction thiosulfate(in) + sulfate(out) = thiosulfate(out) + sulfate(in). It catalyses the reaction 2 hydrogencarbonate(out) + sulfate(in) = 2 hydrogencarbonate(in) + sulfate(out). The enzyme catalyses oxalate(in) + sulfate(out) = oxalate(out) + sulfate(in). The catalysed reaction is oxalate(in) + 2 hydrogencarbonate(out) = oxalate(out) + 2 hydrogencarbonate(in). Functionally, sodium-independent sulfate anion transporter. Can transport other anions including bicarbonate, thiosulfate and oxalate by mediating sulfate-hydrogencarbonate, sulfate-oxalate and oxalate-hydrogencarbonate anion exchange. Mediates sulfate-thiosulfate anion exchange. This chain is Sulfate anion transporter 1 (Slc26a1), found in Mus musculus (Mouse).